A 1433-amino-acid chain; its full sequence is Probable serine/threonine-protein kinase DDB_G0277989 (1433 aa).

Residues 1–4 and K41 contribute to the ATP site; that span reads MNEI. A Protein kinase 1 domain is found at 1–272; it reads MNEIIVGEYK…EFDDFTHPLS (272 aa). The active-site Proton acceptor is the D151. Composition is skewed to low complexity over residues 332–362 and 533–550; these read NNNN…NNNN and TATT…TTTA. Disordered stretches follow at residues 332–366 and 521–550; these read NNNN…SDGP and PSSE…TTTA. Residues 1177 to 1433 form the Protein kinase 2 domain; the sequence is IYDKRYYIQK…QPHVCKSFKK (257 aa).

It belongs to the protein kinase superfamily. Ser/Thr protein kinase family.

It catalyses the reaction L-seryl-[protein] + ATP = O-phospho-L-seryl-[protein] + ADP + H(+). It carries out the reaction L-threonyl-[protein] + ATP = O-phospho-L-threonyl-[protein] + ADP + H(+). This is Probable serine/threonine-protein kinase DDB_G0277989 from Dictyostelium discoideum (Social amoeba).